Consider the following 194-residue polypeptide: ATP-dependent Clp protease proteolytic subunit (194 aa).

Residue Ser-98 is the Nucleophile of the active site. His-123 is an active-site residue.

The protein belongs to the peptidase S14 family. In terms of assembly, fourteen ClpP subunits assemble into 2 heptameric rings which stack back to back to give a disk-like structure with a central cavity, resembling the structure of eukaryotic proteasomes.

It is found in the cytoplasm. The catalysed reaction is Hydrolysis of proteins to small peptides in the presence of ATP and magnesium. alpha-casein is the usual test substrate. In the absence of ATP, only oligopeptides shorter than five residues are hydrolyzed (such as succinyl-Leu-Tyr-|-NHMec, and Leu-Tyr-Leu-|-Tyr-Trp, in which cleavage of the -Tyr-|-Leu- and -Tyr-|-Trp bonds also occurs).. Cleaves peptides in various proteins in a process that requires ATP hydrolysis. Has a chymotrypsin-like activity. Plays a major role in the degradation of misfolded proteins. This chain is ATP-dependent Clp protease proteolytic subunit, found in Wigglesworthia glossinidia brevipalpis.